A 434-amino-acid polypeptide reads, in one-letter code: Nicotinate phosphoribosyltransferase (434 aa).

His-242 carries the post-translational modification Phosphohistidine; by autocatalysis.

The protein belongs to the NAPRTase family. Post-translationally, transiently phosphorylated on a His residue during the reaction cycle. Phosphorylation strongly increases the affinity for substrates and increases the rate of nicotinate D-ribonucleotide production. Dephosphorylation regenerates the low-affinity form of the enzyme, leading to product release.

The catalysed reaction is nicotinate + 5-phospho-alpha-D-ribose 1-diphosphate + ATP + H2O = nicotinate beta-D-ribonucleotide + ADP + phosphate + diphosphate. The protein operates within cofactor biosynthesis; NAD(+) biosynthesis; nicotinate D-ribonucleotide from nicotinate: step 1/1. In terms of biological role, catalyzes the synthesis of beta-nicotinate D-ribonucleotide from nicotinate and 5-phospho-D-ribose 1-phosphate at the expense of ATP. This is Nicotinate phosphoribosyltransferase from Bradyrhizobium diazoefficiens (strain JCM 10833 / BCRC 13528 / IAM 13628 / NBRC 14792 / USDA 110).